Consider the following 286-residue polypeptide: ATP synthase gamma chain (286 aa).

It belongs to the ATPase gamma chain family. F-type ATPases have 2 components, CF(1) - the catalytic core - and CF(0) - the membrane proton channel. CF(1) has five subunits: alpha(3), beta(3), gamma(1), delta(1), epsilon(1). CF(0) has three main subunits: a, b and c.

The protein resides in the cell inner membrane. In terms of biological role, produces ATP from ADP in the presence of a proton gradient across the membrane. The gamma chain is believed to be important in regulating ATPase activity and the flow of protons through the CF(0) complex. The chain is ATP synthase gamma chain from Pseudomonas fluorescens (strain SBW25).